The sequence spans 466 residues: Light-independent protochlorophyllide reductase subunit N (466 aa).

Residues C24, C49, and C109 each coordinate [4Fe-4S] cluster.

Belongs to the BchN/ChlN family. Protochlorophyllide reductase is composed of three subunits; ChlL, ChlN and ChlB. Forms a heterotetramer of two ChlB and two ChlN subunits. It depends on [4Fe-4S] cluster as a cofactor.

It carries out the reaction chlorophyllide a + oxidized 2[4Fe-4S]-[ferredoxin] + 2 ADP + 2 phosphate = protochlorophyllide a + reduced 2[4Fe-4S]-[ferredoxin] + 2 ATP + 2 H2O. The protein operates within porphyrin-containing compound metabolism; chlorophyll biosynthesis (light-independent). Component of the dark-operative protochlorophyllide reductase (DPOR) that uses Mg-ATP and reduced ferredoxin to reduce ring D of protochlorophyllide (Pchlide) to form chlorophyllide a (Chlide). This reaction is light-independent. The NB-protein (ChlN-ChlB) is the catalytic component of the complex. This Synechococcus sp. (strain JA-3-3Ab) (Cyanobacteria bacterium Yellowstone A-Prime) protein is Light-independent protochlorophyllide reductase subunit N.